Reading from the N-terminus, the 447-residue chain is Exodeoxyribonuclease 7 large subunit (447 aa).

Belongs to the XseA family. In terms of assembly, heterooligomer composed of large and small subunits.

The protein localises to the cytoplasm. The catalysed reaction is Exonucleolytic cleavage in either 5'- to 3'- or 3'- to 5'-direction to yield nucleoside 5'-phosphates.. Bidirectionally degrades single-stranded DNA into large acid-insoluble oligonucleotides, which are then degraded further into small acid-soluble oligonucleotides. The polypeptide is Exodeoxyribonuclease 7 large subunit (Lactiplantibacillus plantarum (strain ATCC BAA-793 / NCIMB 8826 / WCFS1) (Lactobacillus plantarum)).